The chain runs to 319 residues: Transaldolase (319 aa).

The active-site Schiff-base intermediate with substrate is lysine 131.

This sequence belongs to the transaldolase family. Type 1 subfamily. Homodimer.

Its subcellular location is the cytoplasm. It catalyses the reaction D-sedoheptulose 7-phosphate + D-glyceraldehyde 3-phosphate = D-erythrose 4-phosphate + beta-D-fructose 6-phosphate. The protein operates within carbohydrate degradation; pentose phosphate pathway; D-glyceraldehyde 3-phosphate and beta-D-fructose 6-phosphate from D-ribose 5-phosphate and D-xylulose 5-phosphate (non-oxidative stage): step 2/3. Functionally, transaldolase is important for the balance of metabolites in the pentose-phosphate pathway. The protein is Transaldolase of Wigglesworthia glossinidia brevipalpis.